We begin with the raw amino-acid sequence, 95 residues long: UPF0235 protein Swoo_1329 (95 aa).

Belongs to the UPF0235 family.

The sequence is that of UPF0235 protein Swoo_1329 from Shewanella woodyi (strain ATCC 51908 / MS32).